A 206-amino-acid chain; its full sequence is Phosphatidyl-N-methylethanolamine N-methyltransferase (206 aa).

The Lumenal segment spans residues 1 to 20; it reads MKESVQEIIQQLIHSVDLQS. The helical intramembrane region spans 21 to 41; sequence SKFQLAIVCTMFNPIFWNIVA. The Lumenal segment spans residues 42–53; sequence RMEYHKHSLTKM. The helical transmembrane segment at 54-74 threads the bilayer; that stretch reads CGGARKGCYMLAATIFSLGIV. Residues 75–101 lie on the Cytoplasmic side of the membrane; sequence RDMVYESALREQPTCSLITGENWTKLG. The helical transmembrane segment at 102–122 threads the bilayer; sequence VALFGLGQVLVLSSMYKLGIT. 106-108 is an S-adenosyl-L-methionine binding site; sequence GLG. Over 123-165 the chain is Lumenal; sequence GTYLGDYFGILMDERVTGFPFNVSNNPMYQGSTLSFLGIALYK. A helical transmembrane segment spans residues 166-186; that stretch reads GKPAGLVVSAVVYFMYKIALR. At 187–206 the chain is on the cytoplasmic side; sequence WEEPFTAMIYANRDKAKKNM. 188 to 189 contacts S-adenosyl-L-methionine; that stretch reads EE.

It belongs to the class VI-like SAM-binding methyltransferase superfamily. PEMT/PEM2 methyltransferase family.

The protein localises to the endoplasmic reticulum membrane. The protein resides in the mitochondrion membrane. It carries out the reaction a 1,2-diacyl-sn-glycero-3-phosphoethanolamine + S-adenosyl-L-methionine = a 1,2-diacyl-sn-glycero-3-phospho-N-methylethanolamine + S-adenosyl-L-homocysteine + H(+). The enzyme catalyses a 1,2-diacyl-sn-glycero-3-phospho-N-methylethanolamine + S-adenosyl-L-methionine = a 1,2-diacyl-sn-glycero-3-phospho-N,N-dimethylethanolamine + S-adenosyl-L-homocysteine + H(+). It catalyses the reaction a 1,2-diacyl-sn-glycero-3-phospho-N,N-dimethylethanolamine + S-adenosyl-L-methionine = a 1,2-diacyl-sn-glycero-3-phosphocholine + S-adenosyl-L-homocysteine + H(+). The protein operates within phospholipid metabolism; phosphatidylcholine biosynthesis. Functionally, catalyzes the second two steps of the methylation pathway of phosphatidylcholine biosynthesis, the SAM-dependent methylation of phosphatidylmonomethylethanolamine (PMME) to phosphatidyldimethylethanolamine (PDME) and of PDME to phosphatidylcholine (PC). Can also catalyze the first methylation reaction of PE to PMME in the absence of PE methyltransferase CHO2. The sequence is that of Phosphatidyl-N-methylethanolamine N-methyltransferase from Saccharomyces cerevisiae (strain ATCC 204508 / S288c) (Baker's yeast).